A 21-amino-acid polypeptide reads, in one-letter code: Snake venom serine protease jerdonase (21 aa).

Residues 1–21 enclose the Peptidase S1 domain; the sequence is IIGGDECNINEHPFLVALYDA.

Belongs to the peptidase S1 family. Snake venom subfamily. In terms of assembly, monomer. In terms of processing, glycosylated; contains 35.8% neutral carbohydrate. In terms of tissue distribution, expressed by the venom gland.

The protein localises to the secreted. With respect to regulation, inhibited by PMSF and soybean trypsin inhibitor. Partially inhibited by L-cysteine and DTT. Not affected by EDTA. Functionally, multifunctional venom serine protease that has fibrino(geno)lytic activity towards the A alpha-chain of human fibrinogen (FGA) and a slow activity towards the B beta-chain (FGB). Also hydrolyzes bovine low-molecular-mass kininogen and releases bradykinin. Catalyzes the hydrolysis of BAEE, S-2238 and S-2302. The protein is Snake venom serine protease jerdonase of Protobothrops jerdonii (Jerdon's pitviper).